Here is a 423-residue protein sequence, read N- to C-terminus: F-box/LRR-repeat protein 2 (423 aa).

Residues G9–V55 form the F-box domain. 13 LRR repeats span residues Q61 to G87, C88 to G113, C114 to S139, C140 to W165, C166 to G191, C192 to S217, C218 to G243, C244 to R269, C270 to E295, C296 to H321, C322 to N350, C351 to D375, and C376 to A401. Residues L80 to G90 are interaction with Calmodulin. K201 is covalently cross-linked (Glycyl lysine isopeptide (Lys-Gly) (interchain with G-Cter in ubiquitin)). A Phosphothreonine; by GSK3-beta modification is found at T404. C420 carries the S-geranylgeranyl cysteine lipid modification. The short motif at C420–L423 is the CAAX motif element.

As to quaternary structure, part of the SCF (SKP1-CUL1-F-box) E3 ubiquitin-protein ligase complex SCF(FBXL2) composed of CUL1, SKP1, RBX1 and FBXL2. Interacts with calmodulin; may antagonize substrate ubiquitination by SCF(FBXL2). May interact with PIK3R1. Interacts with PTPN13. Post-translationally, phosphorylated by GSK-beta (GSK3B), promoting recognition by FBXO3, leading to its ubiquitination by the SCF(FBXO3) complex. Ubiquitinated at Lys-201 by the SCF(FBXO3) complex in response to lipopolysaccharide (LPS), leading to its degradation by the proteasome.

The protein localises to the membrane. Its pathway is protein modification; protein ubiquitination. Functionally, calcium-activated substrate recognition component of the SCF (SKP1-cullin-F-box protein) E3 ubiquitin-protein ligase complex, SCF(FBXL2), which mediates the ubiquitination and subsequent proteasomal degradation of target proteins. Unlike many F-box proteins, FBXL2 does not seem to target phosphodegron within its substrates but rather calmodulin-binding motifs and is thereby antagonized by calmodulin. This is the case for the cyclins CCND2 and CCND3 which polyubiquitination and subsequent degradation are inhibited by calmodulin. Through CCND2 and CCND3 degradation induces cell-cycle arrest in G(0). SCF(FBXL2) also mediates PIK3R2 ubiquitination and proteasomal degradation thereby regulating phosphatidylinositol 3-kinase signaling and autophagy. PCYT1A monoubiquitination by SCF(FBXL2) and subsequent degradation regulates synthesis of phosphatidylcholine, which is utilized for formation of membranes and of pulmonary surfactant. The SCF(FBXL2) complex acts as a regulator of inflammation by mediating ubiquitination and degradation of TRAF proteins (TRAF1, TRAF2, TRAF3, TRAF4, TRAF5 and TRAF6). The SCF(FBXL2) complex acts as a negative regulator of the NLRP3 inflammasome by mediating ubiquitination and degradation of NLRP3. This chain is F-box/LRR-repeat protein 2, found in Mus musculus (Mouse).